The sequence spans 479 residues: MSQGEIVQVIGLVVDVKFSIGKDLPDINNALKVIKSDDDSIILEVILEQGDGVLRCIAMESTDGLRRGMKVEDTGSSISVPVGPDTLGRVFNVLGQPIDGGPEFPADHPRSGIHKEAPKYDELTTSREILETGIKVIDLLEPYLRGGKVGLFGGAGVGKTTIIQELIHNIAQEHNGISVFTGVGERTREGNDLYFEMKASGVLDKTAMVFGQMNEPPGARMRVALTGLTIAEYFRDVEGQDVLLFIDNIFRFTQAGSEVSALLGRIPSAVGYQPTLATEMGQLQERITSTKKGSITSIQAVYVPADDYTDPAPATTFAYLDATTNLERSLVEQGIYPAVDPLESTSSALDPEIVGQEHYDVATRVQHILQRYRELQNIISVLGMDELSDEEKLIVARARRIQFFLSQNFFVAEVFTSVPGSYVPIKETIKGFKMILDGHLDDLPEDAFRGVGPIEDVLKKALKMGVTPSDPEAKALLEK.

An ATP-binding site is contributed by 153 to 160; it reads GGAGVGKT.

Belongs to the ATPase alpha/beta chains family. F-type ATPases have 2 components, CF(1) - the catalytic core - and CF(0) - the membrane proton channel. CF(1) has five subunits: alpha(3), beta(3), gamma(1), delta(1), epsilon(1). CF(0) has three main subunits: a(1), b(2) and c(9-12). The alpha and beta chains form an alternating ring which encloses part of the gamma chain. CF(1) is attached to CF(0) by a central stalk formed by the gamma and epsilon chains, while a peripheral stalk is formed by the delta and b chains.

Its subcellular location is the cell membrane. The enzyme catalyses ATP + H2O + 4 H(+)(in) = ADP + phosphate + 5 H(+)(out). Functionally, produces ATP from ADP in the presence of a proton gradient across the membrane. The catalytic sites are hosted primarily by the beta subunits. The polypeptide is ATP synthase subunit beta (Lactobacillus delbrueckii subsp. bulgaricus (strain ATCC 11842 / DSM 20081 / BCRC 10696 / JCM 1002 / NBRC 13953 / NCIMB 11778 / NCTC 12712 / WDCM 00102 / Lb 14)).